Consider the following 447-residue polypeptide: Methionine aminopeptidase 2-2 (447 aa).

Residues 1-89 (MAAQTAPELA…PRIPLTTLFP (89 aa)) are disordered. The segment covering 15 to 30 (NKNSGSAEANVVSNGG) has biased composition (polar residues). Residues 34–47 (DDAENEGDSDDDKD) are compositionally biased toward acidic residues. Basic residues predominate over residues 59-73 (KKKKKKRSKKKKKAA). His-197 contacts substrate. A divalent metal cation is bound by residues Asp-217, Asp-228, and His-297. His-305 contributes to the substrate binding site. A divalent metal cation-binding residues include Glu-333 and Glu-428.

This sequence belongs to the peptidase M24A family. Methionine aminopeptidase eukaryotic type 2 subfamily. It depends on Co(2+) as a cofactor. The cofactor is Zn(2+). Requires Mn(2+) as cofactor. Fe(2+) is required as a cofactor.

The protein localises to the cytoplasm. It carries out the reaction Release of N-terminal amino acids, preferentially methionine, from peptides and arylamides.. Functionally, cotranslationally removes the N-terminal methionine from nascent proteins. The N-terminal methionine is often cleaved when the second residue in the primary sequence is small and uncharged (Met-Ala-, Cys, Gly, Pro, Ser, Thr, or Val). This is Methionine aminopeptidase 2-2 from Arthroderma otae (strain ATCC MYA-4605 / CBS 113480) (Microsporum canis).